The sequence spans 333 residues: Fructose-1,6-bisphosphatase class 1 1 (333 aa).

Mg(2+) is bound by residues E81, D100, L102, and D103. Substrate is bound by residues 103–106 (DGSS) and N191. E263 contacts Mg(2+).

Belongs to the FBPase class 1 family. As to quaternary structure, homotetramer. Requires Mg(2+) as cofactor.

It localises to the cytoplasm. It catalyses the reaction beta-D-fructose 1,6-bisphosphate + H2O = beta-D-fructose 6-phosphate + phosphate. It participates in carbohydrate biosynthesis; gluconeogenesis. Fructose-1,6-bisphosphatase II is not light-activated. This chain is Fructose-1,6-bisphosphatase class 1 1, found in Cereibacter sphaeroides (Rhodobacter sphaeroides).